Reading from the N-terminus, the 101-residue chain is Peroxisomal biogenesis factor 39 (101 aa).

The protein resides in the peroxisome. May be a peroxin involved in the PTS2-mediated protein import pathway. In Homo sapiens (Human), this protein is Peroxisomal biogenesis factor 39.